A 198-amino-acid polypeptide reads, in one-letter code: Bcl-2-like protein 11 (198 aa).

Positions 1 to 72 (MAKQPSDVSS…PLAPPASPGP (72 aa)) are disordered. Position 69 is a phosphoserine; by MAPK (Ser69). Residues Ser77, Ser87, and Ser94 each carry the phosphoserine modification. A BH3 motif is present at residues 148-162 (IAQELRRIGDEFNAY).

It belongs to the Bcl-2 family. As to quaternary structure, forms heterodimers with a number of antiapoptotic Bcl-2 proteins, including MCL1, BCL2, BCL2L1 isoform Bcl-X(L), BCL2A1/BFL-1, BHRF1, and BCL2L2/BCLW. Does not heterodimerize with proapoptotic proteins such as BAD, BOK or BAK. Identified in a complex containing BCL2L11, DYNLL1 and BCL2L1 isoform Bcl-X(L); BH3 integrity is required for BCL2L1-binding. Interacts with YWHAZ. When phosphorylated, interacts with TRIM2; this interaction is associated with ubiquitination and degradation. Interacts with MCL1; may sequester BCL2L11 to prevent its pro-apoptotic activity. Interacts with GIMAP5. Interacts with BCL2L10/BCL-B. Interacts (when phosphorylated) with USP27X; the interaction leads to BCL2L11 deubiquitination and stabilization. Interacts with humanin; the interaction prevents BIM-induced apoptosis. In terms of assembly, does not interact with humanin. As to quaternary structure, interacts with BAX; the interaction may lead to BAX activation through conformational change. Does not interact with humanin. Interacts with BAX; the interaction may lead to BAX activation through conformational change. Phosphorylation at Ser-69 by MAPK1/MAPK3 leads to interaction with TRIM2 and polyubiquitination, followed by proteasomal degradation. Deubiquitination catalyzed by USP27X stabilizes the protein. Post-translationally, ubiquitination by TRIM2 following phosphorylation by MAPK1/MAPK3 leads to proteasomal degradation. Conversely, deubiquitination catalyzed by USP27X stabilizes the protein. As to expression, isoform BimEL, isoform BimL and isoform BimS are the predominant isoforms and are widely expressed with tissue-specific variation. Isoform Bim-gamma is most abundantly expressed in small intestine and colon, and in lower levels in spleen, prostate, testis, heart, liver and kidney.

It localises to the endomembrane system. It is found in the mitochondrion. Its function is as follows. Induces apoptosis and anoikis. Isoform BimL is more potent than isoform BimEL. Isoform Bim-alpha1, isoform Bim-alpha2 and isoform Bim-alpha3 induce apoptosis, although less potent than isoform BimEL, isoform BimL and isoform BimS. Isoform Bim-gamma induces apoptosis. Isoform Bim-alpha3 induces apoptosis possibly through a caspase-mediated pathway. Isoform BimAC and isoform BimABC lack the ability to induce apoptosis. This chain is Bcl-2-like protein 11 (BCL2L11), found in Homo sapiens (Human).